The following is a 485-amino-acid chain: Glutamate--tRNA ligase (485 aa).

Residues Pro-11 to Asn-21 carry the 'HIGH' region motif. The short motif at Lys-252 to Arg-256 is the 'KMSKS' region element. Residue Lys-255 participates in ATP binding.

The protein belongs to the class-I aminoacyl-tRNA synthetase family. Glutamate--tRNA ligase type 1 subfamily. Monomer.

The protein localises to the cytoplasm. The catalysed reaction is tRNA(Glu) + L-glutamate + ATP = L-glutamyl-tRNA(Glu) + AMP + diphosphate. Catalyzes the attachment of glutamate to tRNA(Glu) in a two-step reaction: glutamate is first activated by ATP to form Glu-AMP and then transferred to the acceptor end of tRNA(Glu). The sequence is that of Glutamate--tRNA ligase from Bacillus cereus (strain ATCC 10987 / NRS 248).